The chain runs to 157 residues: VVEVCVRVTGGEVGDASSLAPKIGPLGLSPKKIGEDIAKETLKDWKGLRITVKLTVQNRQAKISVIPSAAALVIKALKEPARDRKKEKNIKHTGSVTMSDIIEIARVMRPRSCAKDLANGCKEILGTAVSVGCKVDGKDPRDVISAIDDGAIEIPDA.

This sequence belongs to the universal ribosomal protein uL11 family.

In terms of biological role, this protein binds directly to 26S ribosomal RNA. This chain is Large ribosomal subunit protein uL11 (RPL12), found in Chlamydomonas reinhardtii (Chlamydomonas smithii).